The sequence spans 210 residues: Proteasome subunit beta (210 aa).

Positions 1 to 9 are cleaved as a propeptide — removed in mature form; by autocatalysis; the sequence is MIHDKVFKG. Residue T10 is the Nucleophile of the active site.

The protein belongs to the peptidase T1B family. The 20S proteasome core is composed of 14 alpha and 14 beta subunits that assemble into four stacked heptameric rings, resulting in a barrel-shaped structure. The two inner rings, each composed of seven catalytic beta subunits, are sandwiched by two outer rings, each composed of seven alpha subunits. The catalytic chamber with the active sites is on the inside of the barrel. Has a gated structure, the ends of the cylinder being occluded by the N-termini of the alpha-subunits. Is capped at one or both ends by the proteasome regulatory ATPase, PAN.

It localises to the cytoplasm. The catalysed reaction is Cleavage of peptide bonds with very broad specificity.. The formation of the proteasomal ATPase PAN-20S proteasome complex, via the docking of the C-termini of PAN into the intersubunit pockets in the alpha-rings, triggers opening of the gate for substrate entry. Interconversion between the open-gate and close-gate conformations leads to a dynamic regulation of the 20S proteasome proteolysis activity. Functionally, component of the proteasome core, a large protease complex with broad specificity involved in protein degradation. The chain is Proteasome subunit beta from Ferroglobus placidus (strain DSM 10642 / AEDII12DO).